We begin with the raw amino-acid sequence, 428 residues long: C4-dicarboxylate transport protein (428 aa).

9 helical membrane passes run 8–28 (SLYVQVLTAIAIGILLGHFYP), 44–64 (LIKMVIAPVIFCTVVTGIAGM), 76–96 (VALLYFEVVSTIALIIGLIIV), 142–162 (IGAFASGNILQVLLFAVLFGF), 184–204 (VIFGIINMIMRLAPIGAFGAM), 222–242 (LIICFYITCILFVVVVLGSIA), 289–309 (VVGLVIPTGYSFNLDGTSIYL), 326–346 (IFHQITLLVVLLLSSKGAAGV), and 352–372 (IVLAATISAVGHLPVAGLALI).

It belongs to the dicarboxylate/amino acid:cation symporter (DAACS) (TC 2.A.23) family.

It is found in the cell inner membrane. Responsible for the transport of dicarboxylates such as succinate, fumarate, and malate from the periplasm across the membrane. This is C4-dicarboxylate transport protein from Klebsiella pneumoniae subsp. pneumoniae (strain ATCC 700721 / MGH 78578).